The following is a 562-amino-acid chain: Arginine--tRNA ligase (562 aa).

Positions 121 to 131 match the 'HIGH' region motif; that stretch reads PNIAKPMGMGH.

This sequence belongs to the class-I aminoacyl-tRNA synthetase family. Monomer.

Its subcellular location is the cytoplasm. The enzyme catalyses tRNA(Arg) + L-arginine + ATP = L-arginyl-tRNA(Arg) + AMP + diphosphate. The polypeptide is Arginine--tRNA ligase (Limosilactobacillus fermentum (strain NBRC 3956 / LMG 18251) (Lactobacillus fermentum)).